The following is a 457-amino-acid chain: Aromatic amino acid transport protein AroP (457 aa).

Over 1-19 (MMEGQQHGEQLKRGLKNRH) the chain is Cytoplasmic. Residues 20–40 (IQLIALGGAIGTGLFLGSASV) form a helical membrane-spanning segment. At 41–42 (IQ) the chain is on the periplasmic side. The helical transmembrane segment at 43 to 63 (SAGPGIILGYAIAGFIAFLIM) threads the bilayer. Residues 64-86 (RQLGEMVVEEPVAGSFSHFAYKY) lie on the Cytoplasmic side of the membrane. Residues 87–107 (WGSFAGFASGWNYWVLYVLVA) form a helical membrane-spanning segment. Residues 108–117 (MAELTAVGKY) are Periplasmic-facing. A helical membrane pass occupies residues 118–138 (IQFWYPEIPTWVSAAVFFVVI). Topologically, residues 139–155 (NAINLTNVTVFGEMEFW) are cytoplasmic. Residues 156-176 (FAIIKVIAVVAMIIFGGWLLF) traverse the membrane as a helical segment. Topologically, residues 177–201 (SGNGGPQASVSNLWDQGGFLPHGFT) are periplasmic. A helical transmembrane segment spans residues 202–222 (GLVMMMAIIMFSFGGLELVGI). Topologically, residues 223-240 (TAAEADNPEQSIPKATNQ) are cytoplasmic. A helical transmembrane segment spans residues 241-261 (VIYRILIFYIGSLAVLLSLMP). Residues 262–271 (WTRVTADTSP) are Periplasmic-facing. Residues 272–292 (FVLIFHELGDTFVANALNIVV) form a helical membrane-spanning segment. At 293 to 333 (LTAALSVYNSCVYCNSRMLFGLAQQGNAPKALASVDKRGVP) the chain is on the cytoplasmic side. A helical membrane pass occupies residues 334–354 (VNTILVSALVTALCVLINYLA). The Periplasmic segment spans residues 355–358 (PESA). The helical transmembrane segment at 359 to 379 (FGLLMALVVSALVINWAMISL) threads the bilayer. Over 380 to 407 (AHMKFRRAKQEQGVVTRFPALLYPLGNW) the chain is Cytoplasmic. Residues 408–428 (ICLLFMAVVLVIMLMTPGMAI) form a helical membrane-spanning segment. Position 429 (Ser-429) is a topological domain, periplasmic. The chain crosses the membrane as a helical span at residues 430 to 450 (VYLIPVWLVVLGIGYLFKEKT). Topologically, residues 451–457 (AKAVKAH) are cytoplasmic.

This sequence belongs to the amino acid-polyamine-organocation (APC) superfamily. Amino acid transporter (AAT) (TC 2.A.3.1) family.

Its subcellular location is the cell inner membrane. It carries out the reaction L-phenylalanine(in) + H(+)(in) = L-phenylalanine(out) + H(+)(out). The enzyme catalyses L-tryptophan(in) + H(+)(in) = L-tryptophan(out) + H(+)(out). The catalysed reaction is L-tyrosine(in) + H(+)(in) = L-tyrosine(out) + H(+)(out). Functionally, permease that is involved in the active transport across the cytoplasmic membrane of all three aromatic amino acids, phenylalanine, tyrosine and tryptophan. This Escherichia coli O157:H7 protein is Aromatic amino acid transport protein AroP (aroP).